The following is a 126-amino-acid chain: Small ribosomal subunit protein uS13 (126 aa).

The tract at residues 94 to 126 is disordered; the sequence is GLPVRGQKTRNNAHTVKGKPKAAIAGKKKNKVN. Basic residues predominate over residues 109–126; that stretch reads VKGKPKAAIAGKKKNKVN.

Belongs to the universal ribosomal protein uS13 family. As to quaternary structure, part of the 30S ribosomal subunit. Forms a loose heterodimer with protein S19. Forms two bridges to the 50S subunit in the 70S ribosome.

Its function is as follows. Located at the top of the head of the 30S subunit, it contacts several helices of the 16S rRNA. In the 70S ribosome it contacts the 23S rRNA (bridge B1a) and protein L5 of the 50S subunit (bridge B1b), connecting the 2 subunits; these bridges are implicated in subunit movement. Contacts the tRNAs in the A and P-sites. The sequence is that of Small ribosomal subunit protein uS13 from Aster yellows witches'-broom phytoplasma (strain AYWB).